Here is a 318-residue protein sequence, read N- to C-terminus: Mitochondrial thiamine pyrophosphate carrier (318 aa).

Solcar repeat units follow at residues 13 to 106, 116 to 202, and 214 to 309; these read NSKL…LTEL, HQFS…LKRA, and TGNL…FCNL. The next 6 helical transmembrane spans lie at 19-39, 87-107, 122-142, 173-193, 220-240, and 293-313; these read AVAG…LDVI, ILSI…TELL, FVCG…VDVL, VFYK…GLQF, LLCG…LDLF, and ALST…FHCI.

Belongs to the mitochondrial carrier (TC 2.A.29) family.

The protein localises to the mitochondrion membrane. The catalysed reaction is thiamine phosphate(out) + thiamine diphosphate(in) = thiamine phosphate(in) + thiamine diphosphate(out). In terms of biological role, mitochondrial transporter mediating uptake of thiamine diphosphate into mitochondria. It is not clear if the antiporter activity is affected by the membrane potential or by the proton electrochemical gradient. The chain is Mitochondrial thiamine pyrophosphate carrier (Slc25a19) from Rattus norvegicus (Rat).